The following is a 595-amino-acid chain: Inactive serine/threonine-protein kinase PLK5 (595 aa).

Residues 27–279 form the Protein kinase domain; the sequence is YRRGKLIGKG…LDHLLQDDFF (253 aa). ATP is bound by residues 33–41 and K56; that span reads IGKGAFSRC. Residue D150 is the Proton acceptor of the active site. Positions 326-350 are disordered; sequence FTSKEASGPGEEGTEPDHMEAGNEE. Basic and acidic residues predominate over residues 340–350; sequence EPDHMEAGNEE. POLO box domains follow at residues 413–491 and 509–595; these read WAPK…YMQR and DISL…LQSV.

The protein belongs to the protein kinase superfamily. Ser/Thr protein kinase family. CDC5/Polo subfamily. Expressed in the cerebellum, eye and brain cortex (at protein level). Expressed in highly differentiated tissues, such as brain, eyes and ovary. Not detectable in proliferating tissues, such as the colon, spleen and placenta.

It localises to the nucleus. Its subcellular location is the nucleolus. The protein resides in the cytoplasm. Inactive serine/threonine-protein kinase that plays a role in cell cycle progression and neuronal differentiation. The chain is Inactive serine/threonine-protein kinase PLK5 from Mus musculus (Mouse).